Reading from the N-terminus, the 311-residue chain is DNA-directed RNA polymerase subunit alpha (311 aa).

An alpha N-terminal domain (alpha-NTD) region spans residues 1–228; sequence MQYQIERIDH…ELFQPLATVT (228 aa). The alpha C-terminal domain (alpha-CTD) stretch occupies residues 239-311; it reads PSPEAQIPLE…ISIPQSRTSV (73 aa).

This sequence belongs to the RNA polymerase alpha chain family. In terms of assembly, in cyanobacteria the RNAP catalytic core is composed of 2 alpha, 1 beta, 1 beta', 1 gamma and 1 omega subunit. When a sigma factor is associated with the core the holoenzyme is formed, which can initiate transcription.

It carries out the reaction RNA(n) + a ribonucleoside 5'-triphosphate = RNA(n+1) + diphosphate. DNA-dependent RNA polymerase catalyzes the transcription of DNA into RNA using the four ribonucleoside triphosphates as substrates. In Prochlorococcus marinus (strain MIT 9312), this protein is DNA-directed RNA polymerase subunit alpha.